Here is a 671-residue protein sequence, read N- to C-terminus: ATP-dependent zinc metalloprotease FtsH (671 aa).

At 1–22 the chain is on the cytoplasmic side; the sequence is MANPNNNNDNKQNNNNNFFNDN. The helical transmembrane segment at 23 to 43 threads the bilayer; that stretch reads PLLAFAIFSIVIILIFKSFVG. At 44-130 the chain is on the periplasmic side; that stretch reads EGESLGTMMN…ISYEGVVGNG (87 aa). Residues 131–151 form a helical membrane-spanning segment; that stretch reads FFSELISMMLPILIFFAIWIF. Residues 152 to 671 lie on the Cytoplasmic side of the membrane; the sequence is LAKKMSKGMG…SEESDNNKEA (520 aa). 224-231 is an ATP binding site; that stretch reads GPPGTGKT. Position 447 (His447) interacts with Zn(2+). Residue Glu448 is part of the active site. Zn(2+) contacts are provided by His451 and Asp525. A disordered region spans residues 630–671; sequence EKGMPSRLAHKDKVAKNKAEADKKEEALKKEISEESDNNKEA.

This sequence in the central section; belongs to the AAA ATPase family. It in the C-terminal section; belongs to the peptidase M41 family. Homohexamer. Zn(2+) is required as a cofactor.

Its subcellular location is the cell inner membrane. Acts as a processive, ATP-dependent zinc metallopeptidase for both cytoplasmic and membrane proteins. Plays a role in the quality control of integral membrane proteins. In Sulfurovum sp. (strain NBC37-1), this protein is ATP-dependent zinc metalloprotease FtsH.